A 223-amino-acid chain; its full sequence is Cytidylate kinase (223 aa).

The tract at residues 1–23 (MSTSPLVIAIDGPSGSGKSSTSR) is disordered. 12–20 (GPSGSGKSS) contributes to the ATP binding site.

Belongs to the cytidylate kinase family. Type 1 subfamily.

The protein localises to the cytoplasm. It carries out the reaction CMP + ATP = CDP + ADP. The enzyme catalyses dCMP + ATP = dCDP + ADP. In Cutibacterium acnes (strain DSM 16379 / KPA171202) (Propionibacterium acnes), this protein is Cytidylate kinase.